A 216-amino-acid chain; its full sequence is Small ribosomal subunit protein uS3c (216 aa).

A KH type-2 domain is found at 43–115; sequence FENDWGTLYN…QTRIKVIQVN (73 aa).

This sequence belongs to the universal ribosomal protein uS3 family. Part of the 30S ribosomal subunit.

The protein localises to the plastid. Its subcellular location is the chloroplast. This is Small ribosomal subunit protein uS3c (rps3) from Emiliania huxleyi (Coccolithophore).